We begin with the raw amino-acid sequence, 194 residues long: MEPLGLILVAVALGTDAFSLATGLALGGFRGRQAWLFAGTVGLFHIFMPLAGLYLGLLLGRLLGKVAAIIGALVLATMGTLMLWEAYNNRRQGGSMVGQVLRVIPGRGGVLGGVMAILFMAGSVSLDALSVGFGLGAISVNVPLTVLTMGFIAATMTALGLLAGRRLGSFFGNRAELAGGLILVAIGLKMLVGV.

6 helical membrane passes run 6 to 26 (LILV…GLAL), 35 to 55 (WLFA…GLYL), 66 to 86 (VAAI…LWEA), 109 to 129 (GVLG…LDAL), 142 to 162 (VPLT…LGLL), and 174 to 194 (RAEL…LVGV).

It belongs to the MntP (TC 9.B.29) family.

Its subcellular location is the cell membrane. Functionally, probably functions as a manganese efflux pump. This Moorella thermoacetica (strain ATCC 39073 / JCM 9320) protein is Putative manganese efflux pump MntP.